The chain runs to 643 residues: MAAAMIWWPRFLLLLCLTCKGSTFYVPGVAPINFHQNDPVEIKAVKLTSSRTQLPYEYYSLPFCQPNKITYKAENLGEVLRGDRIVNTPFQVLMNSEKKCEVLCGQSNKPVILTVEQSRLVAERITEEYYVHLIADNLPVATRLELYSSNRDSDDKKKEKDVQFEHGYRLGFTDVNKIYLHNHLSFILYYHREDTEEDQEHTYRVVRFEVIPQSIRLEDLKIDEKSSCTLPEGANSLPQEIDPTKENQLYFTYSVHWEESDIKWASRWDTYLTMSDVQIHWFSIINSVVVVFFLSGILSMIIIRTLRKDIANYNKEDDIEDTMEESGWKLVHGDVFRPPQYPMILSSLLGSGIQLFCMILIVIFVAMLGMLSPSSRGALMTTACFLFMFMGVFGGFSAGRLYRTLKGHRWKKGAFCTATLYPGVVFGICFVLNCFIWGKHSSGAVPFPTMVALLCMWFGISLPLVYLGYYFGFRKQPYDNPVRTNQIPRQIPEQRWYMNRFVGILMAGILPFGAMFIELFFIFSAIWENQFYYLFGFLFLVFIILVVSCSQISIVMVYFQLCAEDYRWWWRNFLVSGGSAFYVLVYAIFYFVNKLDIVEFIPSLLYFGYTTLMVLSFWLLTGTIGFYAAYMFVRKIYAAVKID.

The first 23 residues, 1–23, serve as a signal peptide directing secretion; that stretch reads MAAAMIWWPRFLLLLCLTCKGST. The Extracellular portion of the chain corresponds to 24-282; that stretch reads FYVPGVAPIN…TMSDVQIHWF (259 aa). The helical transmembrane segment at 283-303 threads the bilayer; sequence SIINSVVVVFFLSGILSMIII. At 304 to 347 the chain is on the cytoplasmic side; it reads RTLRKDIANYNKEDDIEDTMEESGWKLVHGDVFRPPQYPMILSS. Residue Y313 is modified to Phosphotyrosine. The chain crosses the membrane as a helical span at residues 348–368; it reads LLGSGIQLFCMILIVIFVAML. Topologically, residues 369–377 are extracellular; it reads GMLSPSSRG. The chain crosses the membrane as a helical span at residues 378-398; it reads ALMTTACFLFMFMGVFGGFSA. Residues 399 to 417 lie on the Cytoplasmic side of the membrane; that stretch reads GRLYRTLKGHRWKKGAFCT. Residues 418-438 traverse the membrane as a helical segment; that stretch reads ATLYPGVVFGICFVLNCFIWG. The Extracellular portion of the chain corresponds to 439-450; the sequence is KHSSGAVPFPTM. The chain crosses the membrane as a helical span at residues 451–471; sequence VALLCMWFGISLPLVYLGYYF. Residues 472 to 502 lie on the Cytoplasmic side of the membrane; it reads GFRKQPYDNPVRTNQIPRQIPEQRWYMNRFV. A helical membrane pass occupies residues 503–523; that stretch reads GILMAGILPFGAMFIELFFIF. Over 524-536 the chain is Extracellular; that stretch reads SAIWENQFYYLFG. Residues 537-557 form a helical membrane-spanning segment; it reads FLFLVFIILVVSCSQISIVMV. Residues 558-571 lie on the Cytoplasmic side of the membrane; that stretch reads YFQLCAEDYRWWWR. The helical transmembrane segment at 572–592 threads the bilayer; that stretch reads NFLVSGGSAFYVLVYAIFYFV. Residues 593–599 are Extracellular-facing; the sequence is NKLDIVE. The helical transmembrane segment at 600-620 threads the bilayer; that stretch reads FIPSLLYFGYTTLMVLSFWLL. The Cytoplasmic segment spans residues 621–643; it reads TGTIGFYAAYMFVRKIYAAVKID.

It belongs to the nonaspanin (TM9SF) (TC 9.A.2) family.

It is found in the membrane. It localises to the golgi apparatus. The protein resides in the early endosome. Associates with proteins harboring glycine-rich transmembrane domains and ensures their efficient localization to the cell surface. This is Transmembrane 9 superfamily member 4 (Tm9sf4) from Rattus norvegicus (Rat).